Reading from the N-terminus, the 768-residue chain is Gephyrin (768 aa).

The segment at 14 to 166 is MPT Mo-transferase; that stretch reads QIRVGVLTVS…LPGSKKGSQE (153 aa). Positions 153–348 are interaction with GABARAP; it reads LIINLPGSKK…VDITKVARRH (196 aa). Disordered stretches follow at residues 194 to 245 and 273 to 316; these read DELE…DSSS and TASL…ASRV. Over residues 200–212 the composition is skewed to pro residues; it reads PSPPPPLSPPPTT. 2 positions are modified to phosphoserine: Ser201 and Ser207. Phosphothreonine is present on Thr211. Ser213 is modified (phosphoserine). The S-palmitoyl cysteine moiety is linked to residue Cys225. Residues 274–299 are compositionally biased toward polar residues; the sequence is ASLSTTPSESPRAQATSRLSTASCPT. At Ser275 the chain carries Phosphoserine. Phosphothreonine is present on residues Thr278 and Thr279. Phosphoserine is present on residues Ser281 and Ser283. A lipid anchor (S-palmitoyl cysteine) is attached at Cys297. Residues 326–768 form an MPT adenylyltransferase region; sequence SSKENILRAS…VVDVMVIGRL (443 aa). Phosphoserine is present on Ser337.

This sequence in the N-terminal section; belongs to the MoaB/Mog family. The protein in the C-terminal section; belongs to the MoeA family. Homotrimer, homodimer and homooligomer. Interacts with SRGAP2 (via SH3 domain). Interacts with GLRB. Interacts with GABARAP. Interacts with GABRA3. GABRA3 and GLRB occupy overlapping binding sites. Interacts with ARHGAP32; IQSEC3, INSYN1 and INSYN2A. Mg(2+) serves as cofactor. In terms of processing, phosphorylated. Post-translationally, palmitoylated. Palmitoylation is stimulated by GABA type A receptors activity. Palmitoylation by ZDHHC12 regulates clustering at synapses. Expressed in tissues including spinal cord, brain, liver, kidney and lung.

Its subcellular location is the postsynaptic cell membrane. It localises to the cell membrane. It is found in the cytoplasm. The protein localises to the cytosol. The protein resides in the cytoskeleton. Its subcellular location is the cell projection. It localises to the dendrite. It is found in the postsynaptic density. It carries out the reaction molybdopterin + ATP + H(+) = adenylyl-molybdopterin + diphosphate. The enzyme catalyses adenylyl-molybdopterin + molybdate = Mo-molybdopterin + AMP + H(+). The protein operates within cofactor biosynthesis; molybdopterin biosynthesis. Inhibited by copper and tungsten. Microtubule-associated protein involved in membrane protein-cytoskeleton interactions. It is thought to anchor the inhibitory glycine receptor (GLYR) to subsynaptic microtubules. Acts as a major instructive molecule at inhibitory synapses, where it also clusters GABA type A receptors. Its function is as follows. Also has a catalytic activity and catalyzes two steps in the biosynthesis of the molybdenum cofactor. In the first step, molybdopterin is adenylated. Subsequently, molybdate is inserted into adenylated molybdopterin and AMP is released. The chain is Gephyrin (Gphn) from Rattus norvegicus (Rat).